The following is a 141-amino-acid chain: Hemoglobin subunit alpha-A (141 aa).

The Globin domain maps to 1–141; sequence VLSGSDKTNV…VGNVLTAKYR (141 aa). An O2-binding site is contributed by histidine 58. Histidine 87 is a binding site for heme b.

It belongs to the globin family. As to quaternary structure, heterotetramer of two alpha chains and two beta chains. Red blood cells.

Involved in oxygen transport from the lung to the various peripheral tissues. The polypeptide is Hemoglobin subunit alpha-A (HBAA) (Chroicocephalus ridibundus (Black-headed gull)).